A 396-amino-acid polypeptide reads, in one-letter code: Cytochrome P450 121 (396 aa).

Residue Cys345 coordinates heme.

The protein belongs to the cytochrome P450 family. Heme serves as cofactor.

The protein resides in the cytoplasm. This chain is Cytochrome P450 121 (cyp121), found in Mycobacterium bovis (strain ATCC BAA-935 / AF2122/97).